The sequence spans 359 residues: tRNA N6-adenosine threonylcarbamoyltransferase (359 aa).

Positions 121 and 125 each coordinate Fe cation. Substrate is bound by residues 143 to 147, aspartate 176, glycine 189, and asparagine 286; that span reads LVSGG. Fe cation is bound at residue aspartate 311.

This sequence belongs to the KAE1 / TsaD family. It depends on Fe(2+) as a cofactor.

The protein resides in the cytoplasm. It catalyses the reaction L-threonylcarbamoyladenylate + adenosine(37) in tRNA = N(6)-L-threonylcarbamoyladenosine(37) in tRNA + AMP + H(+). Functionally, required for the formation of a threonylcarbamoyl group on adenosine at position 37 (t(6)A37) in tRNAs that read codons beginning with adenine. Is involved in the transfer of the threonylcarbamoyl moiety of threonylcarbamoyl-AMP (TC-AMP) to the N6 group of A37, together with TsaE and TsaB. TsaD likely plays a direct catalytic role in this reaction. This Jannaschia sp. (strain CCS1) protein is tRNA N6-adenosine threonylcarbamoyltransferase.